We begin with the raw amino-acid sequence, 257 residues long: uncharacterized protein (257 aa).

6 helical membrane-spanning segments follow: residues 23–43 (VLTD…EGLL), 79–99 (FIFI…VLGA), 131–151 (TFGI…AFSV), 158–178 (FAVS…ILMM), 199–219 (AFVL…HYEM), and 221–241 (HSVF…IHYI).

The protein belongs to the TerC family.

The protein localises to the cell membrane. This is an uncharacterized protein from Bacillus subtilis (strain 168).